Reading from the N-terminus, the 137-residue chain is Small ribosomal subunit protein uS12 (137 aa).

The disordered stretch occupies residues 1-43 (MPTINQLVRKGRVSKTKKSDSPALNKGYNSFKKRMTDQNAPQK).

Belongs to the universal ribosomal protein uS12 family. As to quaternary structure, part of the 30S ribosomal subunit. Contacts proteins S8 and S17. May interact with IF1 in the 30S initiation complex.

Functionally, with S4 and S5 plays an important role in translational accuracy. Interacts with and stabilizes bases of the 16S rRNA that are involved in tRNA selection in the A site and with the mRNA backbone. Located at the interface of the 30S and 50S subunits, it traverses the body of the 30S subunit contacting proteins on the other side and probably holding the rRNA structure together. The combined cluster of proteins S8, S12 and S17 appears to hold together the shoulder and platform of the 30S subunit. This Oceanobacillus iheyensis (strain DSM 14371 / CIP 107618 / JCM 11309 / KCTC 3954 / HTE831) protein is Small ribosomal subunit protein uS12.